Consider the following 308-residue polypeptide: Isoflavone reductase-like protein (308 aa).

NADP(+)-binding positions include 11–17, R36, and K45; that span reads GGTGYIG. Residue K133 is the Proton acceptor of the active site. R137 provides a ligand contact to NADP(+).

This sequence belongs to the NmrA-type oxidoreductase family. Isoflavone reductase subfamily. As to quaternary structure, homodimer.

The protein localises to the cytoplasm. The chain is Isoflavone reductase-like protein from Olea europaea (Common olive).